The following is a 485-amino-acid chain: Glutamyl-tRNA(Gln) amidotransferase subunit A (485 aa).

Catalysis depends on charge relay system residues lysine 76 and serine 151. Serine 175 acts as the Acyl-ester intermediate in catalysis.

The protein belongs to the amidase family. GatA subfamily. Heterotrimer of A, B and C subunits.

It carries out the reaction L-glutamyl-tRNA(Gln) + L-glutamine + ATP + H2O = L-glutaminyl-tRNA(Gln) + L-glutamate + ADP + phosphate + H(+). In terms of biological role, allows the formation of correctly charged Gln-tRNA(Gln) through the transamidation of misacylated Glu-tRNA(Gln) in organisms which lack glutaminyl-tRNA synthetase. The reaction takes place in the presence of glutamine and ATP through an activated gamma-phospho-Glu-tRNA(Gln). The sequence is that of Glutamyl-tRNA(Gln) amidotransferase subunit A from Chlorobium luteolum (strain DSM 273 / BCRC 81028 / 2530) (Pelodictyon luteolum).